The following is a 329-amino-acid chain: Glucokinase (329 aa).

13–18 (GDIGGT) contacts ATP.

It belongs to the bacterial glucokinase family.

Its subcellular location is the cytoplasm. It carries out the reaction D-glucose + ATP = D-glucose 6-phosphate + ADP + H(+). This is Glucokinase from Caulobacter sp. (strain K31).